Reading from the N-terminus, the 473-residue chain is mRNA export factor ICP27 homolog (473 aa).

Disordered stretches follow at residues 57–81 and 123–143; these read QELL…NSIY and QTKR…NFPM. The Zn(2+) site is built by Cys362, His438, Cys442, and Cys447. The segment at 362-447 adopts a CHC2-type zinc-finger fold; it reads CKYGTEKRSM…HTRRCSDPAC (86 aa).

It belongs to the HHV-1 ICP27 protein family. In terms of assembly, associates in a complex with RNA, and host export factors NXF1/TAP and ALYREF; these interactions allow nuclear export of viral transcripts.

It localises to the host cytoplasm. It is found in the host nucleus. In terms of biological role, multifunctional regulator of the expression of viral genes that mediates nuclear export of viral intronless mRNAs. This immediate early (EI) protein promotes the nuclear export of viral intronless mRNAs by interacting with mRNAs and host NXF1/TAP. This is mRNA export factor ICP27 homolog from Gallus gallus (Chicken).